The sequence spans 644 residues: Sodium/hydrogen exchanger 9 (644 aa).

The Lumenal segment spans residues 1–20; sequence MAGQLRLTSGKDEDHFQHQG. A helical transmembrane segment spans residues 21–41; it reads AVELLAFNFLLILTILTIWLF. At 42 to 45 the chain is on the cytoplasmic side; the sequence is KNHR. Residues 46 to 66 traverse the membrane as a helical segment; sequence FRFLHETGGAMVYGLIMGLIL. Residues 67 to 126 are Lumenal-facing; it reads RYATAPTDIDSGTVYNCGKLLFSPSTLLVNITDQVYEYKYQREINQHNISPHQGNAILEK. A helical transmembrane segment spans residues 127–147; the sequence is MTFDPEIFFNVLLPPIIFHAG. Topologically, residues 148–164 are cytoplasmic; the sequence is YSLKKRHFFQNLGSILT. Residues 165–185 traverse the membrane as a helical segment; the sequence is YAFLGTAISCVVIGLIMYGFV. Residues 186-203 are Lumenal-facing; it reads KAMVHAGQLKSGDFHFTD. The helical transmembrane segment at 204-224 threads the bilayer; that stretch reads CLFFGSLMSATDPVTVLAIFH. At 225–235 the chain is on the cytoplasmic side; sequence ELHVDPDLYTL. A helical transmembrane segment spans residues 236–256; sequence LFGESVLNDAVAIVLTYSISI. Residues 257 to 277 are Lumenal-facing; the sequence is YSPKENPNAFDTAAFFQSVGN. The helical transmembrane segment at 278 to 298 threads the bilayer; it reads FLGIFAGSFAMGSAYAVVTAL. The Cytoplasmic portion of the chain corresponds to 299–309; sequence LTKFTKLREFP. A helical membrane pass occupies residues 310-327; sequence MLETGLFFLLSWSAFLSA. Residues 328-333 are Lumenal-facing; it reads EAAGLT. A helical membrane pass occupies residues 334–350; it reads GIVAVLFCGVTQAHYTY. Residues 351–364 are Cytoplasmic-facing; it reads NNLSSDSKLRTKQL. The helical transmembrane segment at 365 to 385 threads the bilayer; the sequence is FEFMNFLAENVIFCYMGLALF. Residue Thr386 is a topological domain, lumenal. A helical membrane pass occupies residues 387-407; the sequence is FQNHIFNALFILGAFLAIFVA. Residues 408–429 are Cytoplasmic-facing; the sequence is RACNIYPLSFLLNLGRKQKIPW. The helical transmembrane segment at 430-450 threads the bilayer; it reads NFQHMMMFSGLRGAIAFALAI. Over 451–465 the chain is Lumenal; it reads RNTESQPKQMMFTTT. A helical membrane pass occupies residues 466–486; the sequence is LLLVFFTVWVFGGGTTPMLTW. At 487–644 the chain is on the cytoplasmic side; it reads LQIRVGVDLD…EQTRGQPQMD (158 aa).

Belongs to the monovalent cation:proton antiporter 1 (CPA1) transporter (TC 2.A.36) family. In terms of assembly, homodimer; phosphatidylinositol-4,5-bisphosphate (PIP2) and phosphatidylinositol 3,4,5-trisphosphate (PIP3) could be involved in the dimer stabilization. Interacts (via the C-terminus) with RACK1. Interacts with CHP1. As to expression, expressed in hair bundles and in vestibular hair bundles. Expressed in brain.

It is found in the late endosome membrane. The protein resides in the early endosome membrane. Its subcellular location is the recycling endosome membrane. The protein localises to the cell membrane. It localises to the cytoplasmic vesicle. It is found in the phagosome membrane. The catalysed reaction is Na(+)(in) + H(+)(out) = Na(+)(out) + H(+)(in). It carries out the reaction K(+)(in) + H(+)(out) = K(+)(out) + H(+)(in). Its function is as follows. Endosomal Na(+), K(+)/H(+) antiporter. Mediates the electroneutral exchange of endosomal luminal H(+) for a cytosolic Na(+) or K(+). By facilitating proton efflux, SLC9A9 counteracts the acidity generated by vacuolar (V)-ATPase, thereby limiting luminal acidification. Regulates organellar pH and consequently, endosome maturation and endocytic trafficking of plasma membrane receptors and neurotransporters. Promotes the recycling of transferrin receptors back to the cell surface to facilitate additional iron uptake in the brain. Regulates synaptic transmission by regulating the luminal pH of axonal endosomes. Regulates phagosome lumenal pH, thus affecting phagosome maturation, and consequently, microbicidal activity in macrophages. Can also be active at the cell surface of specialized cells, e.g., in the inner ear hair bundles uses the high K(+) of the endolymph to regulate intracelular pH. In Rattus norvegicus (Rat), this protein is Sodium/hydrogen exchanger 9 (Slc9a9).